Consider the following 307-residue polypeptide: MTTLGHNYDNSLVSNAFGFLRLPLEFNPYATDADWVITGIPFDMATSGRAGCRHGPAAIRQVSTNLAWEGCRWPWDFDVRKRLKVVDCGDLVYEFGDAQDFCDKLQDHAERLLAAGKRMLSFGGDHFVTLPLLCAHAKHFGKMALVHFDAHTDTYANGSKFDHGSMFYHAPNEGLISPAHSVQIGIRTEFERDNGFTVLDAGQVNDRSVDDILAQVKQIVGNLPVYLTFDIDCLDPSAAPGTGTPVIGGLTSDRALKLVRGLQPLNIVGMDIVEVAPAYDQAQITALVAATLALEMLYIQGAKRGDD.

Positions 126, 149, 151, 153, 230, and 232 each coordinate Mn(2+).

It belongs to the arginase family. Agmatinase subfamily. Mn(2+) serves as cofactor.

The catalysed reaction is agmatine + H2O = urea + putrescine. It functions in the pathway amine and polyamine biosynthesis; putrescine biosynthesis via agmatine pathway; putrescine from agmatine: step 1/1. Its function is as follows. Catalyzes the formation of putrescine from agmatine. In Sodalis glossinidius (strain morsitans), this protein is Agmatinase.